A 119-amino-acid polypeptide reads, in one-letter code: Ribonuclease P protein component (119 aa).

It belongs to the RnpA family. In terms of assembly, consists of a catalytic RNA component (M1 or rnpB) and a protein subunit.

It catalyses the reaction Endonucleolytic cleavage of RNA, removing 5'-extranucleotides from tRNA precursor.. In terms of biological role, RNaseP catalyzes the removal of the 5'-leader sequence from pre-tRNA to produce the mature 5'-terminus. It can also cleave other RNA substrates such as 4.5S RNA. The protein component plays an auxiliary but essential role in vivo by binding to the 5'-leader sequence and broadening the substrate specificity of the ribozyme. This chain is Ribonuclease P protein component, found in Escherichia coli O157:H7.